The sequence spans 334 residues: Short-chain dehydrogenase/reductase (334 aa).

NADP(+) contacts are provided by L44, K68, D93, N120, and K152. Active-site proton donor residues include S176 and Y205. Positions 205, 209, and 239 each coordinate NADP(+). K209 (lowers pKa of active site Tyr) is an active-site residue.

Belongs to the short-chain dehydrogenases/reductases (SDR) family.

The protein operates within mycotoxin biosynthesis. Short-chain dehydrogenase/reductase; part of the 2 gene clusters that mediate the biosynthesis of fusicoccins, diterpene glucosides that display phytohormone-like activity and function as potent activators of plasma membrane H(+)-ATPases in plants by modifying 14-3-3 proteins and cause the plant disease constriction canker. The first step in the pathway is performed by the fusicoccadiene synthase PaFS that possesses both prenyl transferase and terpene cyclase activity, converting isopentenyl diphosphate and dimethylallyl diphosphate into geranylgeranyl diphosphate (GGDP) and successively converting GGDP into fusicocca-2,10(14)-diene, a precursor for fusicoccin H. The second step is the oxidation at the C-8 position by the cytochrome P450 monooxygenase PaP450-2 to yield fusicocca-2,10(14)-diene-8-beta-ol. The cytochrome P450 monooxygenase PaP450-1 then catalyzes the hydroxylation at the C-16 position to produce fusicocca-2,10(14)-diene-8-beta,16-diol. The dioxygenase fc-dox then catalyzes the 16-oxydation of fusicocca-2,10(14)-diene-8-beta,16-diol to yield an aldehyde (8-beta-hydroxyfusicocca-1,10(14)-dien-16-al). The short-chain dehydrogenase/reductase fc-sdr catalyzes the reduction of the aldehyde to yield fusicocca-1,10(14)-diene-8-beta,16-diol. The next step is the hydroxylation at C-9 performed by the cytochrome P450 monooxygenase PaP450-3 that leads to fusicoccin H aglycon which is glycosylated to fusicoccin H by the O-glycosyltransferase PaGT. Hydroxylation at C-12 by the cytochrome P450 monooxygenase PaP450-4 leads then to the production of fusicoccin Q and is followed by methylation by the O-methyltransferase PaMT to yield fusicoccin P. Fusicoccin P is further converted to fusicoccin J via prenylation by the O-glucose prenyltransferase PaPT. Cytochrome P450 monooxygenase PaP450-5 then performs hydroxylation at C-19 to yield dideacetyl-fusicoccin A which is acetylated to 3'-O-deacetyl-fusicoccin A by the O-acetyltransferase PaAT-2. Finally, a another acetylation by the O-acetyltransferase PaAT-1 yields fusicoccin A. This chain is Short-chain dehydrogenase/reductase, found in Phomopsis amygdali (Fusicoccum amygdali).